The chain runs to 145 residues: Large ribosomal subunit protein uL13 (145 aa).

The protein belongs to the universal ribosomal protein uL13 family. In terms of assembly, part of the 50S ribosomal subunit.

This protein is one of the early assembly proteins of the 50S ribosomal subunit, although it is not seen to bind rRNA by itself. It is important during the early stages of 50S assembly. This is Large ribosomal subunit protein uL13 from Staphylococcus haemolyticus (strain JCSC1435).